Reading from the N-terminus, the 247-residue chain is V-type proton ATPase subunit D (247 aa).

The protein belongs to the V-ATPase D subunit family. As to quaternary structure, V-ATPase is a heteromultimeric enzyme made up of two complexes: the ATP-hydrolytic V1 complex and the proton translocation V0 complex. The V1 complex consists of three catalytic AB heterodimers that form a heterohexamer, three peripheral stalks each consisting of EG heterodimers, one central rotor including subunits D and F, and the regulatory subunits C and H. The proton translocation complex V0 consists of the proton transport subunit a, a ring of proteolipid subunits c9c'', rotary subunit d, subunits e and f, and the accessory subunits ATP6AP1/Ac45 and ATP6AP2/PRR. Interacts with SNX10.

The protein localises to the membrane. It is found in the cytoplasmic vesicle. It localises to the clathrin-coated vesicle membrane. The protein resides in the cytoplasm. Its subcellular location is the cytoskeleton. The protein localises to the microtubule organizing center. It is found in the centrosome. It localises to the cell projection. The protein resides in the cilium. Subunit of the V1 complex of vacuolar(H+)-ATPase (V-ATPase), a multisubunit enzyme composed of a peripheral complex (V1) that hydrolyzes ATP and a membrane integral complex (V0) that translocates protons. V-ATPase is responsible for acidifying and maintaining the pH of intracellular compartments and in some cell types, is targeted to the plasma membrane, where it is responsible for acidifying the extracellular environment. May play a role in cilium biogenesis through regulation of the transport and the localization of proteins to the cilium. This chain is V-type proton ATPase subunit D (Atp6v1d), found in Mus musculus (Mouse).